A 676-amino-acid chain; its full sequence is MNKGIIQLLALSLFCISVKAQDPWIIKADKIDPANYYGVTVANGMIGIVSSSEPFQVKNVVLAGAYDMYGRGRVSNFLNSFNLLNMYLLFNGDDWDASKVKNMKQELDMQHASFTTTFDYGDVASIKYTYYSLRQLPFCVLMDVSVTAKKTVNITAASVMQTPDALRDVQNYYNEVDGPTGRISLLTSTAKSPTGKLQLCASNAFIFNEADSLAPRLMHEMLDNNMHSMRFSKELAAGQTYSYSVVGSSITSAHTTDPLNEAERLTIFARLQGRDGLIKAHTKAWAELWKSDIQIDGEPQAQQDVHSMLYHLYSFSREGTAYAPSPMGLSGSGYNGHIFWDSDLWMFPALLVLHPEIAKSLIEYRYERLAAAKQNAFAHSFKGAMYPWESADNGTEETPVGSLSGPFEHHITACVALAAWNYYCVTQDKQWLQEKGWPIISACADFWASRVERNGPGQYDIKNVIAADEWAEGIDNDAFTNAAAKANLQCAALAAKVLNVKADPDWQLVAQNIPILKFPDGVTKEFASYKGGGIKQADVNLLAYPLKTITDPAQVKKDLEFYESRIPNEGTPAMTQAIFTLLYSRLGNGDKAYHFFKDAYEPNLNPPFRVIAETKGGTNPYFATGAGGIIQSLLMGFGGLDITPNGITQVKSTLPSNWKSITITGVGPEKKTYVVK.

The first 20 residues, 1–20 (MNKGIIQLLALSLFCISVKA), serve as a signal peptide directing secretion. The active-site Proton donor is Glu469. The active-site Proton acceptor is the Glu613.

It belongs to the glycosyl hydrolase 65 family.

The enzyme catalyses kojibiose + H2O = beta-D-glucose + D-glucose. Functionally, glycosidase that specifically hydrolyzes kojibiose to beta-glucose and glucose. Besides its activity on kojibiose, is also able to act on alpha-1,2-oligoglucans with a higher degree of polymerization. Shows weak activity on nigerose, but is not capable of breaking down trehalose, maltose, isomaltose, sucrose, isomaltulose, turanose or melezitose. This Mucilaginibacter mallensis protein is Kojibiose hydrolase.